The primary structure comprises 299 residues: Protease HtpX homolog (299 aa).

The next 2 helical transmembrane spans lie at 16-36 (VMAAFVILLAVIGLAVGYVFF) and 38-58 (SAIAGLLVALIAAVFYMVLMI). His144 is a Zn(2+) binding site. Glu145 is an active-site residue. His148 contacts Zn(2+). A run of 2 helical transmembrane segments spans residues 159–179 (IALALTAAISLLVNWGMNAFW) and 198–218 (VLLMILAIVVIILAPLAASLV). Residue Glu227 participates in Zn(2+) binding.

Belongs to the peptidase M48B family. Zn(2+) is required as a cofactor.

It localises to the cell membrane. This chain is Protease HtpX homolog, found in Lactiplantibacillus plantarum (strain ATCC BAA-793 / NCIMB 8826 / WCFS1) (Lactobacillus plantarum).